The chain runs to 139 residues: Large ribosomal subunit protein bL17 (139 aa).

This sequence belongs to the bacterial ribosomal protein bL17 family. In terms of assembly, part of the 50S ribosomal subunit. Contacts protein L32.

The sequence is that of Large ribosomal subunit protein bL17 from Afipia carboxidovorans (strain ATCC 49405 / DSM 1227 / KCTC 32145 / OM5) (Oligotropha carboxidovorans).